The primary structure comprises 248 residues: Ribonuclease PH (248 aa).

Residues Arg86 and 124–126 (GTR) contribute to the phosphate site.

It belongs to the RNase PH family. In terms of assembly, homohexameric ring arranged as a trimer of dimers.

It catalyses the reaction tRNA(n+1) + phosphate = tRNA(n) + a ribonucleoside 5'-diphosphate. Phosphorolytic 3'-5' exoribonuclease that plays an important role in tRNA 3'-end maturation. Removes nucleotide residues following the 3'-CCA terminus of tRNAs; can also add nucleotides to the ends of RNA molecules by using nucleoside diphosphates as substrates, but this may not be physiologically important. Probably plays a role in initiation of 16S rRNA degradation (leading to ribosome degradation) during starvation. The protein is Ribonuclease PH of Listeria welshimeri serovar 6b (strain ATCC 35897 / DSM 20650 / CCUG 15529 / CIP 8149 / NCTC 11857 / SLCC 5334 / V8).